The primary structure comprises 94 residues: uncharacterized protein (94 aa).

This is an uncharacterized protein from Rickettsia prowazekii (strain Madrid E).